The chain runs to 194 residues: uncharacterized protein (194 aa).

Residues 17–37 (DVWLYLLVFGCLSVLVLVLVH) traverse the membrane as a helical segment.

Belongs to the IIV-6 307L family.

It is found in the membrane. This is an uncharacterized protein from Invertebrate iridescent virus 3 (IIV-3).